A 219-amino-acid chain; its full sequence is Virginiamycin A acetyltransferase (219 aa).

Histidine 87 is a catalytic residue.

The protein belongs to the transferase hexapeptide repeat family.

Functionally, inactivates the A compounds of virginiamycin-like antibiotics, thus providing resistance to these antibiotics. In Staphylococcus aureus, this protein is Virginiamycin A acetyltransferase (vat).